The sequence spans 268 residues: Ribosomal RNA small subunit methyltransferase A (268 aa).

The S-adenosyl-L-methionine site is built by Asn-18, Leu-20, Gly-45, Glu-66, Asp-91, and Asn-112.

The protein belongs to the class I-like SAM-binding methyltransferase superfamily. rRNA adenine N(6)-methyltransferase family. RsmA subfamily.

It localises to the cytoplasm. The enzyme catalyses adenosine(1518)/adenosine(1519) in 16S rRNA + 4 S-adenosyl-L-methionine = N(6)-dimethyladenosine(1518)/N(6)-dimethyladenosine(1519) in 16S rRNA + 4 S-adenosyl-L-homocysteine + 4 H(+). Its function is as follows. Specifically dimethylates two adjacent adenosines (A1518 and A1519) in the loop of a conserved hairpin near the 3'-end of 16S rRNA in the 30S particle. May play a critical role in biogenesis of 30S subunits. The protein is Ribosomal RNA small subunit methyltransferase A of Shewanella putrefaciens (strain CN-32 / ATCC BAA-453).